The chain runs to 257 residues: MIIKRDNSLSKIDLRDWIWTPFFNDLVDKLSVFEIEPYPVSHDFLSKESITGSRRNPVHVTTLTWAAKFEKIKQVRLACIKGGESLSVFNLLIHPLNDYDLPFFGADFVTLPNGHLLALDLQPALKLDNIHTENVWPRLIPLHDHWQSLLPSGGEIPKEAEPYFSPGFLWSRLPLSKESDNIISEILRPAFGEYLSLYIELLHIAKPLKKERALKILEGQKAYINYRSTKDPARAMLCRFYGKEWTEDYIHKVLFNI.

Belongs to the HY2 family.

It carries out the reaction (3Z)-phycoerythrobilin + oxidized 2[4Fe-4S]-[ferredoxin] = 15,16-dihydrobiliverdin + reduced 2[4Fe-4S]-[ferredoxin] + 2 H(+). Functionally, catalyzes the two-electron reduction of the C2 and C3(1) diene system of 15,16-dihydrobiliverdin. The chain is Phycoerythrobilin:ferredoxin oxidoreductase (pebB) from Prochlorococcus marinus (strain SARG / CCMP1375 / SS120).